A 421-amino-acid polypeptide reads, in one-letter code: Testin (421 aa).

The PET domain occupies 92-199 (MILTNPVAAK…GDVKLPREMD (108 aa)). The interval 133–164 (EKQPVAGSEGAQYRKKQLAKQLPAHDQDPSKC) is disordered. Residues 155–164 (PAHDQDPSKC) are compositionally biased toward basic and acidic residues. LIM zinc-binding domains are found at residues 234-297 (YSCY…CDSE), 299-359 (PRCA…NHAV), and 362-421 (QGCH…KMMS).

Belongs to the prickle / espinas / testin family. Interacts via LIM domain 1 with ZYX. Interacts (via LIM domain 3) with ENAH and VASP. Interacts with ALKBH4, talin, actin, alpha-actinin, GRIP1 and PXN. Interacts (via LIM domain 2) with ACTL7A (via N-terminus). Heterodimer with ACTL7A; the heterodimer interacts with ENAH to form a heterotrimer.

The protein resides in the cytoplasm. It is found in the cell junction. The protein localises to the focal adhesion. Its function is as follows. Scaffold protein that may play a role in cell adhesion, cell spreading and in the reorganization of the actin cytoskeleton. Plays a role in the regulation of cell proliferation. May act as a tumor suppressor. This is Testin (TES) from Canis lupus familiaris (Dog).